Reading from the N-terminus, the 556-residue chain is Arginine--tRNA ligase (556 aa).

Positions 117–127 (PNVAKQMHVGH) match the 'HIGH' region motif.

It belongs to the class-I aminoacyl-tRNA synthetase family. Monomer.

The protein resides in the cytoplasm. It catalyses the reaction tRNA(Arg) + L-arginine + ATP = L-arginyl-tRNA(Arg) + AMP + diphosphate. The chain is Arginine--tRNA ligase from Cutibacterium acnes (strain DSM 16379 / KPA171202) (Propionibacterium acnes).